Reading from the N-terminus, the 147-residue chain is Hemoglobin subunit epsilon (147 aa).

A Globin domain is found at 3–147; it reads HFTAEEKATI…VATALAHKYH (145 aa). S14 and S51 each carry phosphoserine. The heme b site is built by H64 and H93.

The protein belongs to the globin family. In terms of assembly, heterotetramer of two alpha chains and two epsilon chains in early embryonic hemoglobin Gower-2; two zeta chains and two epsilon chains in early embryonic hemoglobin Gower-1. As to expression, red blood cells.

In terms of biological role, the epsilon chain is a beta-type chain of early mammalian embryonic hemoglobin. The sequence is that of Hemoglobin subunit epsilon (HBE1) from Daubentonia madagascariensis (Aye-aye).